Consider the following 253-residue polypeptide: 5-oxoprolinase subunit A (253 aa).

It belongs to the LamB/PxpA family. As to quaternary structure, forms a complex composed of PxpA, PxpB and PxpC.

The catalysed reaction is 5-oxo-L-proline + ATP + 2 H2O = L-glutamate + ADP + phosphate + H(+). Functionally, catalyzes the cleavage of 5-oxoproline to form L-glutamate coupled to the hydrolysis of ATP to ADP and inorganic phosphate. This is 5-oxoprolinase subunit A from Bacillus thuringiensis subsp. konkukian (strain 97-27).